Consider the following 668-residue polypeptide: Protein-glutamine gamma-glutamyltransferase (668 aa).

Residues 1–6 are Cytoplasmic-facing; that stretch reads MNAIPR. A helical transmembrane segment spans residues 7 to 27; sequence VALVWLLVAQVLVILPHLAYM. Over 28–50 the chain is Periplasmic; it reads PLWIAAMWLGCAAWRVQVFRMRA. The chain crosses the membrane as a helical span at residues 51 to 71; sequence GYPRAWVKLALALLAGAGVWL. Topologically, residues 72–74 are cytoplasmic; it reads SRG. The chain crosses the membrane as a helical span at residues 75-95; sequence SLVGLDAGAVLLIAAFILKLV. Over 96-103 the chain is Periplasmic; it reads EMKTRRDA. The next 2 membrane-spanning stretches (helical) occupy residues 104–124 and 125–145; these read LVLVFLGFFAVVVGYLFDDGF and LAALYSLLPVTALLAALIGLQ. The Cytoplasmic segment spans residues 146 to 158; that stretch reads QSAFASRPWPTLR. Residues 159–179 traverse the membrane as a helical segment; sequence LAGGLLLQALPLMLLLFLFFP. Residues 180–548 are Periplasmic-facing; it reads RLGPLWSLPM…FGGLDPTRLG (369 aa). Cysteine 404 (nucleophile) is an active-site residue. Catalysis depends on residues histidine 448 and aspartate 464. The chain crosses the membrane as a helical span at residues 549–569; it reads LLLGAAAILSVGLLALFLLKP. Over 570–668 the chain is Cytoplasmic; it reads WQGRGDLRSR…TRDGRGEEQA (99 aa).

It belongs to the transglutaminase-like superfamily.

Its subcellular location is the cell inner membrane. It catalyses the reaction L-glutaminyl-[protein] + L-lysyl-[protein] = [protein]-L-lysyl-N(6)-5-L-glutamyl-[protein] + NH4(+). Functionally, displays transglutaminase activity (TGase) in vitro. Plays a critical role in the viability of P.aeruginosa. Might contribute to an essential function linked to the cell wall. This Pseudomonas aeruginosa (strain ATCC 15692 / DSM 22644 / CIP 104116 / JCM 14847 / LMG 12228 / 1C / PRS 101 / PAO1) protein is Protein-glutamine gamma-glutamyltransferase (tgpA).